An 82-amino-acid chain; its full sequence is Small ribosomal subunit protein uS17 (82 aa).

This sequence belongs to the universal ribosomal protein uS17 family. As to quaternary structure, part of the 30S ribosomal subunit.

Its function is as follows. One of the primary rRNA binding proteins, it binds specifically to the 5'-end of 16S ribosomal RNA. In Rhodopseudomonas palustris (strain TIE-1), this protein is Small ribosomal subunit protein uS17.